Reading from the N-terminus, the 324-residue chain is Methionyl-tRNA formyltransferase (324 aa).

109–112 (SILP) is a (6S)-5,6,7,8-tetrahydrofolate binding site.

The protein belongs to the Fmt family.

It carries out the reaction L-methionyl-tRNA(fMet) + (6R)-10-formyltetrahydrofolate = N-formyl-L-methionyl-tRNA(fMet) + (6S)-5,6,7,8-tetrahydrofolate + H(+). Functionally, attaches a formyl group to the free amino group of methionyl-tRNA(fMet). The formyl group appears to play a dual role in the initiator identity of N-formylmethionyl-tRNA by promoting its recognition by IF2 and preventing the misappropriation of this tRNA by the elongation apparatus. The protein is Methionyl-tRNA formyltransferase of Acidothermus cellulolyticus (strain ATCC 43068 / DSM 8971 / 11B).